We begin with the raw amino-acid sequence, 105 residues long: Small ribosomal subunit protein uS17 (105 aa).

The protein belongs to the universal ribosomal protein uS17 family. In terms of assembly, part of the 30S ribosomal subunit.

Its function is as follows. One of the primary rRNA binding proteins, it binds specifically to the 5'-end of 16S ribosomal RNA. In Thermus aquaticus, this protein is Small ribosomal subunit protein uS17.